The chain runs to 516 residues: Maturase K (516 aa).

The protein belongs to the intron maturase 2 family. MatK subfamily.

It localises to the plastid. The protein localises to the chloroplast. Functionally, usually encoded in the trnK tRNA gene intron. Probably assists in splicing its own and other chloroplast group II introns. The protein is Maturase K of Galanthus nivalis (Common snowdrop).